The primary structure comprises 401 residues: Tryptophan synthase beta chain (401 aa).

Lys-88 carries the post-translational modification N6-(pyridoxal phosphate)lysine.

This sequence belongs to the TrpB family. Tetramer of two alpha and two beta chains. The cofactor is pyridoxal 5'-phosphate.

The enzyme catalyses (1S,2R)-1-C-(indol-3-yl)glycerol 3-phosphate + L-serine = D-glyceraldehyde 3-phosphate + L-tryptophan + H2O. The protein operates within amino-acid biosynthesis; L-tryptophan biosynthesis; L-tryptophan from chorismate: step 5/5. Functionally, the beta subunit is responsible for the synthesis of L-tryptophan from indole and L-serine. In Shewanella denitrificans (strain OS217 / ATCC BAA-1090 / DSM 15013), this protein is Tryptophan synthase beta chain.